A 214-amino-acid chain; its full sequence is tRNA (guanine-N(7)-)-methyltransferase (214 aa).

Residues Glu43, Glu68, Asp95, and Asp117 each coordinate S-adenosyl-L-methionine. The active site involves Asp117. Substrate is bound by residues Lys121, Asp153, and 190–193; that span reads TEYE.

This sequence belongs to the class I-like SAM-binding methyltransferase superfamily. TrmB family.

It catalyses the reaction guanosine(46) in tRNA + S-adenosyl-L-methionine = N(7)-methylguanosine(46) in tRNA + S-adenosyl-L-homocysteine. It functions in the pathway tRNA modification; N(7)-methylguanine-tRNA biosynthesis. Its function is as follows. Catalyzes the formation of N(7)-methylguanine at position 46 (m7G46) in tRNA. This Staphylococcus aureus (strain COL) protein is tRNA (guanine-N(7)-)-methyltransferase.